The chain runs to 465 residues: Cysteine--tRNA ligase (465 aa).

A Zn(2+)-binding site is contributed by cysteine 27. The short motif at 29–39 (PTVYDDAHLGH) is the 'HIGH' region element. Residues cysteine 207, histidine 237, and glutamate 241 each contribute to the Zn(2+) site. The 'KMSKS' region motif lies at 269–273 (KMSKS). Lysine 272 is an ATP binding site.

This sequence belongs to the class-I aminoacyl-tRNA synthetase family. Monomer. It depends on Zn(2+) as a cofactor.

Its subcellular location is the cytoplasm. The catalysed reaction is tRNA(Cys) + L-cysteine + ATP = L-cysteinyl-tRNA(Cys) + AMP + diphosphate. This Helicobacter pylori (strain Shi470) protein is Cysteine--tRNA ligase.